The following is a 54-amino-acid chain: Large ribosomal subunit protein bL33B (54 aa).

This sequence belongs to the bacterial ribosomal protein bL33 family.

This is Large ribosomal subunit protein bL33B from Myxococcus xanthus (strain DK1622).